We begin with the raw amino-acid sequence, 554 residues long: Wee1-like protein kinase 2-C (554 aa).

2 disordered regions span residues 1 to 86 (MRTA…GGEC) and 145 to 183 (TLVN…SQMK). Polar residues-rich tracts occupy residues 38–48 (SPVSSWRTNNC) and 147–163 (VNVN…THFQ). The Protein kinase domain occupies 213-487 (FLEIEKIGAG…AKNSVLRRCV (275 aa)). Residues 219–227 (IGAGEFGSV) and Lys242 contribute to the ATP site. Catalysis depends on Asp340, which acts as the Proton acceptor. Mg(2+) contacts are provided by Asn345 and Asp377. The stretch at 490–516 (AAELQKQLNVEKFKTAMLERELQAAKL) forms a coiled coil.

Belongs to the protein kinase superfamily. Ser/Thr protein kinase family. WEE1 subfamily.

It localises to the nucleus. It carries out the reaction L-tyrosyl-[protein] + ATP = O-phospho-L-tyrosyl-[protein] + ADP + H(+). Its function is as follows. Protein tyrosine kinase that phosphorylates and inhibits cdk1 and acts as a regulator of meiosis in oocytes. Required to ensure the meiotic cell cycle in oocytes by phosphorylating cdk1 at 'Tyr-15', leading to inhibit cdk1 activity and prevent meiosis. The sequence is that of Wee1-like protein kinase 2-C (wee2-c) from Xenopus laevis (African clawed frog).